A 215-amino-acid chain; its full sequence is Large ribosomal subunit protein uL4 (215 aa).

The tract at residues 43 to 97 is disordered; that stretch reads RRQGTHSTKTRAEVSGGGKKPWRQKGTGRARAGSTRSPIWVGGGKTHTPKPRDYS.

It belongs to the universal ribosomal protein uL4 family. Part of the 50S ribosomal subunit.

Functionally, one of the primary rRNA binding proteins, this protein initially binds near the 5'-end of the 23S rRNA. It is important during the early stages of 50S assembly. It makes multiple contacts with different domains of the 23S rRNA in the assembled 50S subunit and ribosome. In terms of biological role, forms part of the polypeptide exit tunnel. The chain is Large ribosomal subunit protein uL4 from Brachyspira pilosicoli (Serpulina pilosicoli).